The primary structure comprises 155 residues: Ribonuclease H (155 aa).

In terms of domain architecture, RNase H type-1 spans 1–142 (MLKQVEIFTD…CDELARAAAM (142 aa)). Positions 10, 48, 70, and 134 each coordinate Mg(2+).

It belongs to the RNase H family. In terms of assembly, monomer. The cofactor is Mg(2+).

The protein localises to the cytoplasm. The enzyme catalyses Endonucleolytic cleavage to 5'-phosphomonoester.. In terms of biological role, endonuclease that specifically degrades the RNA of RNA-DNA hybrids. The chain is Ribonuclease H from Salmonella paratyphi C (strain RKS4594).